The sequence spans 364 residues: Isopentenyl-diphosphate delta-isomerase (364 aa).

Basic and acidic residues predominate over residues 1–13 (MSSAQRKDDHVRL). The interval 1 to 24 (MSSAQRKDDHVRLATEQQRAHSGR) is disordered. 6 to 7 (RK) is a binding site for substrate. Residues 64–66 (AMT), S94, and N123 contribute to the FMN site. Residue 94–96 (SMH) participates in substrate binding. Q153 is a substrate binding site. E154 contributes to the Mg(2+) binding site. Residues K185, S210, T215, 259–261 (GIR), and 280–281 (SG) contribute to the FMN site.

It belongs to the IPP isomerase type 2 family. As to quaternary structure, homooctamer. Dimer of tetramers. FMN serves as cofactor. The cofactor is NADPH. It depends on Mg(2+) as a cofactor.

It localises to the cytoplasm. It carries out the reaction isopentenyl diphosphate = dimethylallyl diphosphate. In terms of biological role, involved in the biosynthesis of isoprenoids. Catalyzes the 1,3-allylic rearrangement of the homoallylic substrate isopentenyl (IPP) to its allylic isomer, dimethylallyl diphosphate (DMAPP). In Kitasatospora griseola (Streptomyces griseolosporeus), this protein is Isopentenyl-diphosphate delta-isomerase.